Consider the following 484-residue polypeptide: EF-hand calcium-binding domain-containing protein 14 (484 aa).

3 disordered regions span residues 1–48, 227–255, and 313–395; these read MKKR…TDEE, GSME…HSES, and EQRT…FTSD. Residues 37–48 are compositionally biased toward acidic residues; sequence PDSDSESSTDEE. Polar residues-rich tracts occupy residues 228 to 239, 315 to 324, and 335 to 347; these read SMENNGSNQILP, RTNVSSSTME, and LVTN…QAQS. 2 EF-hand domains span residues 423 to 452 and 453 to 484; these read SSIK…WNSL and GSAM…ALGI. 5 residues coordinate Ca(2+): aspartate 466, asparagine 468, aspartate 470, arginine 472, and glutamate 477.

This is EF-hand calcium-binding domain-containing protein 14 (Efcab14) from Mus musculus (Mouse).